Consider the following 1060-residue polypeptide: Valine--tRNA ligase, mitochondrial (1060 aa).

The transit peptide at 1-15 (MPHLPLASFRPPLWG) directs the protein to the mitochondrion. The disordered stretch occupies residues 25-50 (PQALCTQPEPHGSPVSRRNREAKQKR). Positions 146–156 (PNVTGSLHIGH) match the 'HIGH' region motif. An N6-acetyllysine modification is found at Lys548. Residues 659-663 (KMSKS) carry the 'KMSKS' region motif. Lys662 contributes to the ATP binding site.

It belongs to the class-I aminoacyl-tRNA synthetase family.

The protein resides in the mitochondrion. It catalyses the reaction tRNA(Val) + L-valine + ATP = L-valyl-tRNA(Val) + AMP + diphosphate. In terms of biological role, catalyzes the attachment of valine to tRNA(Val) in a two-step reaction: valine is first activated by ATP to form Val-AMP and then transferred to the acceptor end of tRNA(Val). The sequence is that of Valine--tRNA ligase, mitochondrial (Vars2) from Mus musculus (Mouse).